The chain runs to 77 residues: MARVCQVTGKAPMVGNNVSHANNKTKRRFLPNLQNRRFFVESENRWVSLRVSNAGLRLIDKKGIDSVLADLRARGEV.

This sequence belongs to the bacterial ribosomal protein bL28 family.

This Cupriavidus necator (strain ATCC 17699 / DSM 428 / KCTC 22496 / NCIMB 10442 / H16 / Stanier 337) (Ralstonia eutropha) protein is Large ribosomal subunit protein bL28.